Reading from the N-terminus, the 326-residue chain is uncharacterized protein (326 aa).

Y53 acts as the Proton donor in catalysis. Residue 215–225 (SPLAGGLLGGK) participates in NADP(+) binding. Residues 242-305 (IEKHRLQLEK…AVEISLDKEI (64 aa)) adopt a coiled-coil conformation.

Belongs to the aldo/keto reductase family. Aldo/keto reductase 2 subfamily.

This is an uncharacterized protein from Bacillus subtilis (strain 168).